A 190-amino-acid polypeptide reads, in one-letter code: MGAELCKRICCEFGTTSGEPLKDALGRQVSLRSYDNIPPTSSSDEGEDDDDGEDDDNEERQQKLRLCGSGCGGNDSSSGSHREATHDGPKKNAVRSTFREDKAPKPSKQSKKKKKPSKHHHHQQSSIMQETDDLDEEDTSIYLSPPPVPPVQVVAKRLPRPDTPRTPRQKKISQRPPTPGTKKPAASLPF.

Glycine 2 carries the N-myristoyl glycine; by host lipid modification. The disordered stretch occupies residues 14 to 190 (GTTSGEPLKD…TKKPAASLPF (177 aa)). The segment covering 30–43 (SLRSYDNIPPTSSS) has biased composition (polar residues). Over residues 44–58 (DEGEDDDDGEDDDNE) the composition is skewed to acidic residues. Positions 80 to 90 (SHREATHDGPK) are enriched in basic and acidic residues. Basic residues predominate over residues 108–123 (KQSKKKKKPSKHHHHQ). Acidic residues predominate over residues 130–139 (ETDDLDEEDT).

This sequence belongs to the herpesviridae cytoplasmic envelopment protein 3 family. In terms of assembly, interacts with cytoplasmic envelopment protein 2; this interaction is essential for the proper localization of each protein to the assembly complex and thus for the production of infectious virus. Myristoylation and palmitoylation (probably on one or more of the nearby cysteines at the N-terminus) enable membrane-binding and Golgi apparatus-specific targeting and are essential for efficient packaging. In terms of processing, phosphorylated. Phosphorylation does not seem to be required for recycling to the host Golgi apparatus. Packaging is selective for underphosphorylated forms.

Its subcellular location is the virion tegument. The protein localises to the virion membrane. It localises to the host cell membrane. The protein resides in the host Golgi apparatus membrane. Plays an important role in the cytoplasmic envelopment of tegument proteins and capsids during the assembly and egress processes. Also participates in viral entry at the fusion step probably by regulating the core fusion machinery. The sequence is that of Cytoplasmic envelopment protein 3 (UL99) from Human cytomegalovirus (strain Merlin) (HHV-5).